The sequence spans 1107 residues: Lon protease homolog, mitochondrial (1107 aa).

A mitochondrion-targeting transit peptide spans 1–31 (MLSRQRIPRILASRTSLAHSIRSFTSTTSSI). 2 disordered regions span residues 32–152 (RPVA…PGDK) and 273–329 (PEAA…PYEP). The segment covering 51–60 (TNLSSFSTYT) has biased composition (polar residues). Basic and acidic residues predominate over residues 80-101 (EEERKANVEHAEAEAKEAESKQ). Gly residues predominate over residues 122–141 (GAAGGSSAGSGSGADGGSGD). Residues 142–152 (GGKRGRKPGDK) are compositionally biased toward basic and acidic residues. The 276-residue stretch at 166 to 441 (VMAIPIAKRP…KALLVLKKEH (276 aa)) folds into the Lon N-terminal domain. ATP is bound at residue 594–601 (GPPGVGKT). The interval 808-858 (PESEALTEEGKAAQEETEKKKSEEAASGETSSPKAATEASEKETTEKPRVA) is disordered. Basic and acidic residues predominate over residues 815 to 831 (EEGKAAQEETEKKKSEE). The segment covering 832 to 845 (AASGETSSPKAATE) has biased composition (low complexity). Basic and acidic residues predominate over residues 846 to 856 (ASEKETTEKPR). The Lon proteolytic domain occupies 891–1077 (VTPPGVTMGL…SEVFDLIFPK (187 aa)). Active-site residues include Ser983 and Lys1026. Residues 1085–1107 (KSRIIEDDKSEKEESKKKNDDDE) are disordered.

Belongs to the peptidase S16 family. Homohexamer or homoheptamer. Organized in a ring with a central cavity.

The protein resides in the mitochondrion matrix. The enzyme catalyses Hydrolysis of proteins in presence of ATP.. Its function is as follows. ATP-dependent serine protease that mediates the selective degradation of misfolded, unassembled or oxidatively damaged polypeptides as well as certain short-lived regulatory proteins in the mitochondrial matrix. May also have a chaperone function in the assembly of inner membrane protein complexes. Participates in the regulation of mitochondrial gene expression and in the maintenance of the integrity of the mitochondrial genome. Binds to mitochondrial DNA in a site-specific manner. This Neurospora crassa (strain ATCC 24698 / 74-OR23-1A / CBS 708.71 / DSM 1257 / FGSC 987) protein is Lon protease homolog, mitochondrial (pim1).